Here is a 283-residue protein sequence, read N- to C-terminus: Putative 4-diphosphocytidyl-2-C-methyl-D-erythritol kinase (283 aa).

Lys-10 is a catalytic residue. 94–104 (PVCAGLGGGST) contacts ATP. Asp-136 is a catalytic residue.

This sequence belongs to the GHMP kinase family. IspE subfamily.

It catalyses the reaction 4-CDP-2-C-methyl-D-erythritol + ATP = 4-CDP-2-C-methyl-D-erythritol 2-phosphate + ADP + H(+). Functionally, catalyzes the phosphorylation of the position 2 hydroxy group of 4-diphosphocytidyl-2C-methyl-D-erythritol. The sequence is that of Putative 4-diphosphocytidyl-2-C-methyl-D-erythritol kinase (ispE) from Streptococcus agalactiae serotype Ia (strain ATCC 27591 / A909 / CDC SS700).